Here is a 312-residue protein sequence, read N- to C-terminus: tRNA dimethylallyltransferase (312 aa).

13-20 (GPTAVGKT) lines the ATP pocket. Residue 15 to 20 (TAVGKT) participates in substrate binding. Interaction with substrate tRNA regions lie at residues 38 to 41 (DSVQ) and 163 to 167 (QRVVR).

Belongs to the IPP transferase family. As to quaternary structure, monomer. Mg(2+) serves as cofactor.

It catalyses the reaction adenosine(37) in tRNA + dimethylallyl diphosphate = N(6)-dimethylallyladenosine(37) in tRNA + diphosphate. In terms of biological role, catalyzes the transfer of a dimethylallyl group onto the adenine at position 37 in tRNAs that read codons beginning with uridine, leading to the formation of N6-(dimethylallyl)adenosine (i(6)A). The sequence is that of tRNA dimethylallyltransferase from Exiguobacterium sibiricum (strain DSM 17290 / CCUG 55495 / CIP 109462 / JCM 13490 / 255-15).